We begin with the raw amino-acid sequence, 263 residues long: Phosphatidylglycerol--prolipoprotein diacylglyceryl transferase (263 aa).

Helical transmembrane passes span 7 to 27 (IFSI…LGIV), 50 to 70 (LLTA…VLIY), 85 to 105 (TWKG…AVII), and 112 to 132 (IPIF…LFLG). A 1,2-diacyl-sn-glycero-3-phospho-(1'-sn-glycerol) is bound at residue arginine 133. The next 3 membrane-spanning stretches (helical) occupy residues 169–189 (LYEA…LFFL), 197–217 (GTLT…VEFF), and 233–253 (MGQL…LSAL).

Belongs to the Lgt family.

It is found in the cell membrane. The enzyme catalyses L-cysteinyl-[prolipoprotein] + a 1,2-diacyl-sn-glycero-3-phospho-(1'-sn-glycerol) = an S-1,2-diacyl-sn-glyceryl-L-cysteinyl-[prolipoprotein] + sn-glycerol 1-phosphate + H(+). It participates in protein modification; lipoprotein biosynthesis (diacylglyceryl transfer). Its function is as follows. Catalyzes the transfer of the diacylglyceryl group from phosphatidylglycerol to the sulfhydryl group of the N-terminal cysteine of a prolipoprotein, the first step in the formation of mature lipoproteins. This is Phosphatidylglycerol--prolipoprotein diacylglyceryl transferase from Wolbachia sp. subsp. Brugia malayi (strain TRS).